A 366-amino-acid polypeptide reads, in one-letter code: D-alanine--D-alanine ligase A (366 aa).

The 204-residue stretch at 145 to 348 folds into the ATP-grasp domain; sequence KRLLRDAGLK…YRELITALIE (204 aa). An ATP-binding site is contributed by 175-230; sequence VEQLGLPLFVKPANQGSSVGVSKVKREADLRAALDEAFRYDHKVLVEQAVIGREIE. Mg(2+) is bound by residues aspartate 302, glutamate 315, and asparagine 317.

This sequence belongs to the D-alanine--D-alanine ligase family. Mg(2+) is required as a cofactor. It depends on Mn(2+) as a cofactor.

It localises to the cytoplasm. It carries out the reaction 2 D-alanine + ATP = D-alanyl-D-alanine + ADP + phosphate + H(+). It functions in the pathway cell wall biogenesis; peptidoglycan biosynthesis. Its function is as follows. Cell wall formation. The sequence is that of D-alanine--D-alanine ligase A from Chromobacterium violaceum (strain ATCC 12472 / DSM 30191 / JCM 1249 / CCUG 213 / NBRC 12614 / NCIMB 9131 / NCTC 9757 / MK).